A 157-amino-acid polypeptide reads, in one-letter code: MSTPSGSNPLPMADKLEAKGGNGGKIWDDGVHEGVSQIYIQEGSTGGIASIKFDYVKNGQPKAGSTHGNSYQNFTEWFDLNHTCDEHILSVKCYYDEGEIQGLVIKTNIRTSAYMGYNIGTTFTLEVKGKKIVGFHGSFDKNLTSLGAYFAPLSPAK.

The region spanning 13-152 is the Jacalin-type lectin domain; that stretch reads ADKLEAKGGN…LTSLGAYFAP (140 aa).

Belongs to the jacalin lectin family. Expressed in stems, leaves and flowers. Not detected in roots.

Confers broad resistance to potexviruses. Inhibits virus accumulation at the cellular level. The protein is Jacalin-related lectin 15 (JAL15) of Arabidopsis thaliana (Mouse-ear cress).